Consider the following 716-residue polypeptide: Putative proline--tRNA ligase C19C7.06 (716 aa).

Positions 655–675 (KNSARQVNGDEPEDEKAPSMG) are disordered.

The protein belongs to the class-II aminoacyl-tRNA synthetase family.

Its subcellular location is the cytoplasm. The catalysed reaction is tRNA(Pro) + L-proline + ATP = L-prolyl-tRNA(Pro) + AMP + diphosphate. The protein is Putative proline--tRNA ligase C19C7.06 (prs1) of Schizosaccharomyces pombe (strain 972 / ATCC 24843) (Fission yeast).